The primary structure comprises 575 residues: Septation ring formation regulator EzrA (575 aa).

Topologically, residues 1–8 (MSNGQLIY) are extracellular. The chain crosses the membrane as a helical span at residues 9–27 (LMVAIAVILVLAYVVAIFL). Over 28–575 (RKRNEGRLEA…YEKTRETIRF (548 aa)) the chain is Cytoplasmic. 4 coiled-coil regions span residues 110–191 (QIDQ…FVTL), 265–301 (LYEA…LYDI), 354–416 (VRRI…IEKD), and 456–526 (TASN…IQEA).

This sequence belongs to the EzrA family.

The protein localises to the cell membrane. In terms of biological role, negative regulator of FtsZ ring formation; modulates the frequency and position of FtsZ ring formation. Inhibits FtsZ ring formation at polar sites. Interacts either with FtsZ or with one of its binding partners to promote depolymerization. The sequence is that of Septation ring formation regulator EzrA from Streptococcus pneumoniae (strain JJA).